Consider the following 225-residue polypeptide: Peroxiredoxin-2E-2, chloroplastic (225 aa).

The N-terminal 42 residues, 1–42 (MAAPTAAALSTLSTASVTSGKRFITSSFSLSFSSRPLATGVR), are a transit peptide targeting the chloroplast. One can recognise a Thioredoxin domain in the interval 63–225 (IAVGDKLPDA…SSAEEMLKAL (163 aa)). C111 (cysteine sulfenic acid (-SOH) intermediate) is an active-site residue.

Belongs to the peroxiredoxin family. Prx5 subfamily. In terms of assembly, monomer.

It is found in the plastid. The protein localises to the chloroplast stroma. It carries out the reaction [glutaredoxin]-dithiol + a hydroperoxide = [glutaredoxin]-disulfide + an alcohol + H2O. Thiol-specific peroxidase that catalyzes the reduction of hydrogen peroxide and organic hydroperoxides to water and alcohols, respectively. Plays a role in cell protection against oxidative stress by detoxifying peroxides. May be involved in chloroplast redox homeostasis. This is Peroxiredoxin-2E-2, chloroplastic (PRXIIE-2) from Oryza sativa subsp. japonica (Rice).